A 138-amino-acid polypeptide reads, in one-letter code: Large ribosomal subunit protein bL17 (138 aa).

Belongs to the bacterial ribosomal protein bL17 family. In terms of assembly, part of the 50S ribosomal subunit. Contacts protein L32.

The sequence is that of Large ribosomal subunit protein bL17 from Halorhodospira halophila (strain DSM 244 / SL1) (Ectothiorhodospira halophila (strain DSM 244 / SL1)).